We begin with the raw amino-acid sequence, 216 residues long: Potassium-transporting ATPase KdpC subunit (216 aa).

Residues 12-32 form a helical membrane-spanning segment; sequence LLGVSLLVFGLLYQGSLMAIG. Over residues 197-207 the composition is skewed to polar residues; it reads QNETDQNSDMN. The interval 197–216 is disordered; the sequence is QNETDQNSDMNASEIANGDH.

The protein belongs to the KdpC family. As to quaternary structure, the system is composed of three essential subunits: KdpA, KdpB and KdpC. The complex also contains KdpF, a small non-essential subunit.

The protein resides in the cell membrane. Part of the high-affinity ATP-driven potassium transport (or Kdp) system, which catalyzes the hydrolysis of ATP coupled with the electrogenic transport of potassium into the cytoplasm. This subunit acts as a catalytic chaperone that increases the ATP-binding affinity of the ATP-hydrolyzing subunit KdpB by the formation of a transient KdpB/KdpC/ATP ternary complex. The Kdp system is essential for growth under K(+) limitation, and for survival under desiccation and salt crystal inclusion. This Halobacterium salinarum (strain ATCC 29341 / DSM 671 / R1) protein is Potassium-transporting ATPase KdpC subunit.